A 1204-amino-acid chain; its full sequence is Erythroid differentiation-related factor 1 (1204 aa).

Disordered regions lie at residues 1–30 (MGDA…QAES), 220–264 (QPVS…ASSQ), 483–527 (PKKE…SDDS), and 586–613 (KKES…RGGP). Low complexity-rich tracts occupy residues 9–30 (AEGP…QAES), 223–241 (SSTT…NDSE), and 253–263 (SSVSEDPSASS). Acidic residues predominate over residues 496–513 (NSDESYSEEEEEMPDSDE). 2 TPR repeats span residues 693–726 (CCLC…QNAN) and 920–953 (DIHP…LSRK).

Its subcellular location is the nucleus. Transcription factor involved in erythroid differentiation. Involved in transcriptional activation of the globin gene. In Pongo abelii (Sumatran orangutan), this protein is Erythroid differentiation-related factor 1 (EDRF1).